We begin with the raw amino-acid sequence, 160 residues long: Cyclic pyranopterin monophosphate synthase (160 aa).

Substrate is bound by residues L74–H76 and M112–E113. D127 is an active-site residue.

The protein belongs to the MoaC family. Homohexamer; trimer of dimers.

The catalysed reaction is (8S)-3',8-cyclo-7,8-dihydroguanosine 5'-triphosphate = cyclic pyranopterin phosphate + diphosphate. The protein operates within cofactor biosynthesis; molybdopterin biosynthesis. Catalyzes the conversion of (8S)-3',8-cyclo-7,8-dihydroguanosine 5'-triphosphate to cyclic pyranopterin monophosphate (cPMP). This is Cyclic pyranopterin monophosphate synthase from Geotalea uraniireducens (strain Rf4) (Geobacter uraniireducens).